Consider the following 709-residue polypeptide: Golgin-84 (709 aa).

Residues 1 to 664 (MASWLKVAED…RATRFLWRHP (664 aa)) are Cytoplasmic-facing. Disordered regions lie at residues 24 to 132 (TELS…VVDR), 144 to 195 (EVEV…NQDA), and 211 to 265 (EVIH…DQLE). Residues 29-43 (EQSSPQPSGSSSQEG) are compositionally biased toward low complexity. Residues 78–89 (PPRERIKIEKIR) show a composition bias toward basic and acidic residues. Over residues 94–113 (VDSSSVDASASKPDVSSSDV) the composition is skewed to low complexity. Over residues 114 to 132 (KGLDDDGGAEKEEKVVVDR) the composition is skewed to basic and acidic residues. A compositionally biased stretch (low complexity) spans 162–180 (DGAADSGNSEGAAESSAPS). Basic and acidic residues-rich tracts occupy residues 211 to 222 (EVIHEKNIKEVP) and 248 to 265 (QQEH…DQLE). The stretch at 287 to 592 (RVCAGLSSRL…AALEFQLEKS (306 aa)) forms a coiled coil. The chain crosses the membrane as a helical; Signal-anchor for type II membrane protein span at residues 665-684 (VARVSLLFYLVFVHLFLMYL). Residues 685 to 707 (MHRLQDFASREGPTAMGGLANSD) are Lumenal-facing.

Its subcellular location is the golgi apparatus membrane. Functionally, may be involved in maintaining Golgi structure and in intra-Golgi transport. The chain is Golgin-84 from Oryza sativa subsp. japonica (Rice).